The sequence spans 729 residues: MLYKGDTLYLDWLEDGIAELVFDAPGSVNKLDTATVASLGEAIGVLEQQSDLKGLLLRSNKAAFIVGADITEFLSLFLVPEEQLSQWLHFANSVFNRLEDLPVPTIAAVNGYALGGGCECVLATDYRLATPDLRIGLPETKLGIMPGFGGSVRMPRMLGADSALEIIAAGKDVGADQALKIGLVDGVVKAEKLIEGAMAILRQAINGDLDWKAKRQPKLEPLKLSEIEATMSFTIAKGMVAQTAGKHYPAPITAVKTIEAAARFGREEALNLENKSFVPLAHTNEARALVGIFLNDQYVKGKAKKLTKDVETPKQAAVLGAGIMGGGIAYQSAWKGVPVVMKDINDKSLTLGMTEAAKLLNKQLERGKIDGLKLAGVISTIHPTLDYAGFDRVDVVVEAVVENPKVKKAVLAETEQKVRPDTVLASNTSTIPISELANALERPENFCGMHFFNPVHRMPLVEIIRGEKSSDETIAKVVAWASKMGKTPIVVNDCPGFFVNRVLFPYFAGFSQLLRDGADFRKIDKVMEKQFGWPMGPAYLLDVVGIDTAHHAQAVMAAGFPQRMQKDYRDAIDALFDANRFGQKNGLGFWRYKEDSKGKPKKEEDAVVDDLLAEVSQPKRDFSEEEIIARMMIPMVNEVVRCLEEGIIATPAEADMALVYGLGFPPFHGGAFRWLDTLGSAKYLDMAQQYQHLGPLYEVPEGLRNKARHNEPYYPPVEPARPVGDLKTA.

Residues Met-1–Lys-189 are enoyl-CoA hydratase/isomerase. Residue Asp-296 participates in substrate binding. The tract at residues Glu-311–Ala-729 is 3-hydroxyacyl-CoA dehydrogenase. NAD(+)-binding positions include Met-324, Asp-343, Val-400–Glu-402, Lys-407, and Ser-429. His-450 acts as the For 3-hydroxyacyl-CoA dehydrogenase activity in catalysis. Asn-453 contributes to the NAD(+) binding site. Residues Asn-500 and Tyr-660 each coordinate substrate. Residues Arg-708–Ala-729 form a disordered region.

In the N-terminal section; belongs to the enoyl-CoA hydratase/isomerase family. The protein in the C-terminal section; belongs to the 3-hydroxyacyl-CoA dehydrogenase family. Heterotetramer of two alpha chains (FadB) and two beta chains (FadA).

It carries out the reaction a (3S)-3-hydroxyacyl-CoA + NAD(+) = a 3-oxoacyl-CoA + NADH + H(+). It catalyses the reaction a (3S)-3-hydroxyacyl-CoA = a (2E)-enoyl-CoA + H2O. The enzyme catalyses a 4-saturated-(3S)-3-hydroxyacyl-CoA = a (3E)-enoyl-CoA + H2O. The catalysed reaction is (3S)-3-hydroxybutanoyl-CoA = (3R)-3-hydroxybutanoyl-CoA. It carries out the reaction a (3Z)-enoyl-CoA = a 4-saturated (2E)-enoyl-CoA. It catalyses the reaction a (3E)-enoyl-CoA = a 4-saturated (2E)-enoyl-CoA. The protein operates within lipid metabolism; fatty acid beta-oxidation. Functionally, involved in the aerobic and anaerobic degradation of long-chain fatty acids via beta-oxidation cycle. Catalyzes the formation of 3-oxoacyl-CoA from enoyl-CoA via L-3-hydroxyacyl-CoA. It can also use D-3-hydroxyacyl-CoA and cis-3-enoyl-CoA as substrate. The chain is Fatty acid oxidation complex subunit alpha from Escherichia coli (strain SMS-3-5 / SECEC).